We begin with the raw amino-acid sequence, 100 residues long: MARKSLIQREKKRQKLEQKYHSIRRSSKKEISKVPSLSDKWEIYGKLQSPPRNSAPTRLHRRCFLTGRPRANYRDFGLSGHILREMVHACLLPGATRSSW.

The interval Met-1–Ile-31 is disordered.

This sequence belongs to the universal ribosomal protein uS14 family. In terms of assembly, part of the 30S ribosomal subunit.

It localises to the plastid. Its subcellular location is the chloroplast. Its function is as follows. Binds 16S rRNA, required for the assembly of 30S particles. In Nicotiana tomentosiformis (Tobacco), this protein is Small ribosomal subunit protein uS14c.